Consider the following 343-residue polypeptide: Cathepsin Q (343 aa).

An N-terminal signal peptide occupies residues 1–20 (MTPAVFLVILCLGVVPGASA). Positions 21-124 (LDLSLDVQWQ…FPNSWNWRDA (104 aa)) are cleaved as a propeptide — activation peptide. 2 disulfide bridges follow: cysteine 146/cysteine 189 and cysteine 180/cysteine 222. The active site involves cysteine 149. Asparagine 228 is a glycosylation site (N-linked (GlcNAc...) asparagine). Cysteine 280 and cysteine 332 form a disulfide bridge. Residue histidine 286 is part of the active site. A glycan (N-linked (GlcNAc...) asparagine) is linked at asparagine 298. Asparagine 310 is an active-site residue.

Belongs to the peptidase C1 family. As to expression, highly expressed in placenta.

It localises to the lysosome. In Rattus norvegicus (Rat), this protein is Cathepsin Q (Ctsq).